The following is a 103-amino-acid chain: Small ribosomal subunit protein uS10 (103 aa).

The protein belongs to the universal ribosomal protein uS10 family. Part of the 30S ribosomal subunit.

Its function is as follows. Involved in the binding of tRNA to the ribosomes. The chain is Small ribosomal subunit protein uS10 from Buchnera aphidicola subsp. Cinara cedri (strain Cc).